Here is a 118-residue protein sequence, read N- to C-terminus: Small ribosomal subunit protein uS13 (118 aa).

Belongs to the universal ribosomal protein uS13 family. In terms of assembly, part of the 30S ribosomal subunit. Forms a loose heterodimer with protein S19. Forms two bridges to the 50S subunit in the 70S ribosome.

Its function is as follows. Located at the top of the head of the 30S subunit, it contacts several helices of the 16S rRNA. In the 70S ribosome it contacts the 23S rRNA (bridge B1a) and protein L5 of the 50S subunit (bridge B1b), connecting the 2 subunits; these bridges are implicated in subunit movement. Contacts the tRNAs in the A and P-sites. The sequence is that of Small ribosomal subunit protein uS13 from Carsonella ruddii (strain PV).